The primary structure comprises 471 residues: Tetratricopeptide repeat protein 29 (471 aa).

TPR repeat units follow at residues Asp-92–Glu-131, Tyr-136–Ile-173, Ala-182–Arg-215, Val-234–Gly-267, Gly-274–Leu-307, Gly-314–Asn-347, and Ile-354–Val-387.

It localises to the cytoplasm. The protein resides in the cytoskeleton. It is found in the flagellum axoneme. Axonemal protein which is implicated in axonemal and/or peri-axonemal structure assembly and regulates flagellum assembly and beating and therefore sperm motility. The protein is Tetratricopeptide repeat protein 29 (Ttc29) of Rattus norvegicus (Rat).